The chain runs to 130 residues: Small ribosomal subunit protein uS9 (130 aa).

It belongs to the universal ribosomal protein uS9 family.

In Variovorax paradoxus (strain S110), this protein is Small ribosomal subunit protein uS9.